A 255-amino-acid chain; its full sequence is Protein PH0439 (255 aa).

It belongs to the CinA family.

The chain is Protein PH0439 from Pyrococcus horikoshii (strain ATCC 700860 / DSM 12428 / JCM 9974 / NBRC 100139 / OT-3).